We begin with the raw amino-acid sequence, 609 residues long: Adagio protein 1 (609 aa).

Residues 1–17 (MEWDSGSDLSADDASSL) are compositionally biased toward low complexity. The segment at 1-24 (MEWDSGSDLSADDASSLADDEEGG) is disordered. Residues 32 to 114 (IPYPVGNLLH…SEIRKCIDEG (83 aa)) enclose the PAS domain. At C82 the chain carries S-4a-FMN cysteine. One can recognise a PAC domain in the interval 118-161 (QGELLNFRKDGSPLMNRLRLTPIYGDDDTITHIIGIQFFIETDI). The 47-residue stretch at 195-241 (CGLFQLSDEVVSMKILSRLTPRDVASVSSVCRRLYVLTKNEDLWRRV) folds into the F-box domain. Kelch repeat units lie at residues 292 to 342 (SRCN…SSPP), 345 to 392 (RWGH…SGLA), 397 to 445 (RSWH…PAAW), 450 to 501 (RLGH…TGSG), and 516 to 564 (RLDH…NIPG).

It belongs to the ADAGIO family. In terms of assembly, interacts with NFXL2. Interacts (via N-terminus) with GI and (via Kelch repeats) with ADO3. Component of an E3 ubiquitin ligase SCF(ADO1) complex composed of SKP1A/ASK1 (or SKP1B/ASK2), CUL1, RBX1 and ADO1. Also interacts with SKP1D/ASK4, SKP1K/ASK11, CRY1, PHYB, APRR1 and APRR5, and probably with SKP1N/ASK14 and SKP1S/ASK19. Post-translationally, may be ubiquitinated. Degraded in a proteasome-dependent manner. In terms of processing, FMN binds covalently to cysteine after exposure to blue light and is reversed in the dark. In terms of tissue distribution, ubiquitously expressed with higher levels in cotyledons and leaves.

The protein localises to the nucleus. The protein resides in the cytoplasm. The protein operates within protein modification; protein ubiquitination. Functionally, component of an E3 ubiquitin ligase complex that plays a central role in blue light-dependent circadian cycles. Acts as a blue light photoreceptor, due to the presence of FMN, that mediates light-regulated protein degradation of critical clock components by targeting them to the proteasome complex. The SCF(ADO1) E3 ubiquitin ligase complex is involved in the regulation of circadian clock-dependent processes including the transition to flowering time, hypocotyl elongation, cotyledons and leaf movement rhythms. APRR1/TOC1 and APRR5, but not 'GIGANTEA', are proteolytic substrates of this ubiquitin ligase complex. Blue light enhances cooperative stabilization of 'GIGANTEA' and ADO1/ZTL, leading to amplification and sharpening of the expression profile of APRR1/TOC1. ADO1/ZTL interacts with ADO3, preventing the interaction of ADO3 with CDF1. The polypeptide is Adagio protein 1 (ADO1) (Arabidopsis thaliana (Mouse-ear cress)).